The chain runs to 316 residues: Transaldolase (316 aa).

The active-site Schiff-base intermediate with substrate is the Lys-132.

It belongs to the transaldolase family. Type 1 subfamily. As to quaternary structure, homodimer.

The protein localises to the cytoplasm. The catalysed reaction is D-sedoheptulose 7-phosphate + D-glyceraldehyde 3-phosphate = D-erythrose 4-phosphate + beta-D-fructose 6-phosphate. It functions in the pathway carbohydrate degradation; pentose phosphate pathway; D-glyceraldehyde 3-phosphate and beta-D-fructose 6-phosphate from D-ribose 5-phosphate and D-xylulose 5-phosphate (non-oxidative stage): step 2/3. Functionally, transaldolase is important for the balance of metabolites in the pentose-phosphate pathway. The chain is Transaldolase from Marinomonas sp. (strain MWYL1).